The primary structure comprises 650 residues: Flap endonuclease 1 (650 aa).

Positions 1-106 are N-domain; that stretch reads MGIKGLTKFI…SELEKRGEKR (106 aa). Asp-34 is a binding site for Mg(2+). Residues Arg-47 and Arg-72 each contribute to the DNA site. Mg(2+) is bound by residues Asp-88, Glu-160, Glu-162, Asp-181, and Asp-183. Positions 124–266 are I-domain; it reads EIKKQSGRTV…KTAYNLIKEY (143 aa). DNA is bound at residue Glu-160. Gly-244 and Asp-246 together coordinate DNA. Asp-246 lines the Mg(2+) pocket. Positions 349–357 are interaction with PCNA; it reads TQRRLDNFF. Residues 371 to 592 form a disordered region; sequence ETKKEQTLPA…NSYNNIKNNN (222 aa). Basic and acidic residues-rich tracts occupy residues 413–469, 478–502, and 511–524; these read MKEE…KKSL, DSDK…EKIN, and DHSR…KDNI. Residues 525-562 show a composition bias toward low complexity; the sequence is SDINNNNNNNNNNSSSNNNNISNNHFNSVSSNSTFNSS. Basic and acidic residues predominate over residues 565-581; that stretch reads LKSEDTLKSNSPLKEDS. The span at 582 to 592 shows a compositional bias: low complexity; the sequence is PNSYNNIKNNN.

This sequence belongs to the XPG/RAD2 endonuclease family. FEN1 subfamily. As to quaternary structure, interacts with PCNA1 and PCNA2. Three molecules of FEN1 bind to one PCNA trimer with each molecule binding to one PCNA monomer. PCNA stimulates the nuclease activity without altering cleavage specificity. Requires Mg(2+) as cofactor. In terms of processing, phosphorylated. Phosphorylation upon DNA damage induces relocalization to the nuclear plasma.

The protein localises to the nucleus. Its subcellular location is the nucleolus. It is found in the nucleoplasm. The protein resides in the mitochondrion. With respect to regulation, inhibited by monovalent metal ions. Structure-specific nuclease with 5'-flap endonuclease and 5'-3' exonuclease activities involved in DNA replication and repair. During DNA replication, cleaves the 5'-overhanging flap structure that is generated by displacement synthesis when DNA polymerase encounters the 5'-end of a downstream Okazaki fragment. It enters the flap from the 5'-end and then tracks to cleave the flap base, leaving a nick for ligation. Also involved in the long patch base excision repair (LP-BER) pathway, by cleaving within the apurinic/apyrimidinic (AP) site-terminated flap. Acts as a genome stabilization factor that prevents flaps from equilibrating into structures that lead to duplications and deletions. Also possesses 5'-3' exonuclease activity on nicked or gapped double-stranded DNA, and exhibits RNase H activity. Also involved in replication and repair of rDNA and in repairing mitochondrial DNA. The polypeptide is Flap endonuclease 1 (Plasmodium falciparum).